The primary structure comprises 243 residues: MHSPPYLLSPAPNTPFPPAEYALREPNGLLAIGGDLTPQRLLAAYRNGIFPWFTEGQPPLWWSPDPRTVFRSDSIHLSRRFRRNLRTSTWTVRADTMFAAVIDACASTPRRGQDGTWITANMREAYLTLHQHSYAHSVEVFDGTMLVGGIYGVALGRMFFGESMFSTRNGASKIALASLAHFLHTHSAPLIDAQVENQHLLNLGAERWPRKDFLAYVRRLITQTDLPACWSVLFGEQLSRELV.

Belongs to the L/F-transferase family.

Its subcellular location is the cytoplasm. It catalyses the reaction N-terminal L-lysyl-[protein] + L-leucyl-tRNA(Leu) = N-terminal L-leucyl-L-lysyl-[protein] + tRNA(Leu) + H(+). The catalysed reaction is N-terminal L-arginyl-[protein] + L-leucyl-tRNA(Leu) = N-terminal L-leucyl-L-arginyl-[protein] + tRNA(Leu) + H(+). The enzyme catalyses L-phenylalanyl-tRNA(Phe) + an N-terminal L-alpha-aminoacyl-[protein] = an N-terminal L-phenylalanyl-L-alpha-aminoacyl-[protein] + tRNA(Phe). In terms of biological role, functions in the N-end rule pathway of protein degradation where it conjugates Leu, Phe and, less efficiently, Met from aminoacyl-tRNAs to the N-termini of proteins containing an N-terminal arginine or lysine. This Xylella fastidiosa (strain 9a5c) protein is Leucyl/phenylalanyl-tRNA--protein transferase.